We begin with the raw amino-acid sequence, 164 residues long: Siroheme decarboxylase alpha subunit (164 aa).

It belongs to the Ahb/Nir family. Forms a heterodimer composed of AhbA and AhbB.

The catalysed reaction is siroheme + 2 H(+) = 12,18-didecarboxysiroheme + 2 CO2. It participates in porphyrin-containing compound metabolism; protoheme biosynthesis. In terms of biological role, involved in siroheme-dependent heme b biosynthesis. Catalyzes the decarboxylation of siroheme into didecarboxysiroheme. The protein is Siroheme decarboxylase alpha subunit of Oleidesulfovibrio alaskensis (strain ATCC BAA-1058 / DSM 17464 / G20) (Desulfovibrio alaskensis).